We begin with the raw amino-acid sequence, 291 residues long: Phosphate import ATP-binding protein PstB (291 aa).

Positions 1–21 (MANKQIIDKNDDLQAHTDRND) are disordered. In terms of domain architecture, ABC transporter spans 45-286 (YSTKNLDLWY…PSDKQTEDYI (242 aa)). 77–84 (GPSGCGKS) contributes to the ATP binding site.

The protein belongs to the ABC transporter superfamily. Phosphate importer (TC 3.A.1.7) family. As to quaternary structure, the complex is composed of two ATP-binding proteins (PstB), two transmembrane proteins (PstC and PstA) and a solute-binding protein (PstS).

The protein resides in the cell membrane. It catalyses the reaction phosphate(out) + ATP + H2O = ADP + 2 phosphate(in) + H(+). Part of the ABC transporter complex PstSACB involved in phosphate import. Responsible for energy coupling to the transport system. The polypeptide is Phosphate import ATP-binding protein PstB (Staphylococcus saprophyticus subsp. saprophyticus (strain ATCC 15305 / DSM 20229 / NCIMB 8711 / NCTC 7292 / S-41)).